Here is a 507-residue protein sequence, read N- to C-terminus: Maturase K (507 aa).

Belongs to the intron maturase 2 family. MatK subfamily.

The protein localises to the plastid. Its subcellular location is the chloroplast. Its function is as follows. Usually encoded in the trnK tRNA gene intron. Probably assists in splicing its own and other chloroplast group II introns. The chain is Maturase K from Fagopyrum tataricum (Tartarian buckwheat).